The following is a 506-amino-acid chain: Anaerobic nitric oxide reductase transcription regulator NorR (506 aa).

At Asp57 the chain carries 4-aspartylphosphate. One can recognise a Sigma-54 factor interaction domain in the interval 187–416 (MIGLSPAMTQ…LEHAIHRAVV (230 aa)). ATP is bound by residues 215-222 (GETGTGKE) and 278-287 (ADNGTLFLDE). The segment at residues 481 to 500 (WAASARALETDVANLHRLAK) is a DNA-binding region (H-T-H motif).

The protein operates within nitrogen metabolism; nitric oxide reduction. Required for the expression of anaerobic nitric oxide (NO) reductase, acts as a transcriptional activator for at least the norVW operon. Activation also requires sigma-54. This is Anaerobic nitric oxide reductase transcription regulator NorR from Salmonella gallinarum (strain 287/91 / NCTC 13346).